The primary structure comprises 396 residues: Putative isochorismate synthase (396 aa).

It belongs to the isochorismate synthase family.

It carries out the reaction chorismate = isochorismate. The protein operates within siderophore biosynthesis; amonabactin biosynthesis. Its function is as follows. Involved in the synthesis of amonabactin, a phenolate siderophore containing 2,3-dihydroxybenzoic acid (2,3-DHB). The protein is Putative isochorismate synthase (amoA) of Aeromonas hydrophila.